The primary structure comprises 545 residues: Pentatricopeptide repeat-containing protein At4g18840 (545 aa).

PPR repeat units follow at residues 104 to 138 (NGFT…PVFP), 139 to 173 (DKYS…GLVT), 174 to 204 (DVFV…MPVR), 205 to 239 (DAVS…NVES), 240 to 266 (WNFM…MPVR), 267 to 301 (DVVS…STEK), 303 to 337 (DGFT…GIEI), 338 to 368 (EGFL…TSKR), 369 to 403 (DVST…GFKP), 404 to 434 (NGIT…MSSV), and 440 to 474 (TIEH…EASI). The segment at 475–545 (LLESLLGACK…ERVNRSLDVA (71 aa)) is type E motif.

It belongs to the PPR family. PCMP-E subfamily.

The polypeptide is Pentatricopeptide repeat-containing protein At4g18840 (PCMP-E101) (Arabidopsis thaliana (Mouse-ear cress)).